The sequence spans 331 residues: Eukaryotic translation initiation factor 2 subunit 2 (331 aa).

2 disordered regions span residues 1–75 and 97–120; these read MSGD…DLNF and AIKD…LDIM. Position 2 is an N-acetylserine (Ser2). Residues Ser2 and Ser13 each carry the phosphoserine modification. A compositionally biased stretch (basic residues) spans 13–22; sequence SKKKKKKKKP. At Thr36 the chain carries Phosphothreonine. Residues 40 to 51 are compositionally biased toward basic and acidic residues; that stretch reads ETKEVEPEPTEE. Residue Ser67 is modified to Phosphoserine. Residue Lys102 forms a Glycyl lysine isopeptide (Lys-Gly) (interchain with G-Cter in SUMO2) linkage. Position 105 is a phosphoserine (Ser105). The span at 106-118 shows a compositional bias: acidic residues; it reads DAQEPAEPEDDLD. Phosphoserine occurs at positions 158 and 216. Residues Lys263 and Lys291 each carry the N6-acetyllysine modification. A C4-type zinc finger spans residues 279–303; sequence CHTCRSPDTILQKDTRLYFLQCETC.

Belongs to the eIF-2-beta/eIF-5 family. Eukaryotic translation initiation factor 2 eIF2 is a heterotrimeric complex composed of an alpha (EIF2S1), a beta (EIF2S2) and a gamma (EIF2S3) chain. eIF2 is member of the 43S pre-initiation complex (43S PIC). eIF2 forms a complex with at least CELF1/CUGBP1, CALR, CALR3, EIF2S1, EIF2S2, HSP90B1 and HSPA5. Interacts with BZW2/5MP1. Interacts with EIF5.

Its subcellular location is the cytoplasm. It is found in the cytosol. Its function is as follows. Component of the eIF2 complex that functions in the early steps of protein synthesis by forming a ternary complex with GTP and initiator tRNA. This complex binds to a 40S ribosomal subunit, followed by mRNA binding to form the 43S pre-initiation complex (43S PIC). Junction of the 60S ribosomal subunit to form the 80S initiation complex is preceded by hydrolysis of the GTP bound to eIF2 and release of an eIF2-GDP binary complex. In order for eIF2 to recycle and catalyze another round of initiation, the GDP bound to eIF2 must exchange with GTP by way of a reaction catalyzed by eIF2B. In Mus musculus (Mouse), this protein is Eukaryotic translation initiation factor 2 subunit 2 (Eif2s2).